Reading from the N-terminus, the 272-residue chain is MINIDFDNIEQSQPTLYDTLASDVKFLNTPHFELPPNANPGDFLRETFDHPSAPKALEFAHGTTTLAFVYGGGIIVSVDSKSTQGPYVASRSVKKVIEITPTLLGTMAGGAADCSFWERELGRRCRLYELRNKELISVAAASKILANIVYSYKGYGLSMGTMITGWDKTGPQLYYVDNDGTRLHGQRFSCGSGSTYAYGVLDTGFKWDMNDEEAYELGRRAVYHATHRDAYSGGAINVYHVQKDGWKKISSDDCFKLYQKYYNIVPINKPAN.

Residues Met1–Gly62 constitute a propeptide, removed in mature form. The active-site Nucleophile is the Thr63.

Belongs to the peptidase T1B family. In terms of assembly, the 26S proteasome consists of a 20S proteasome core and two 19S regulatory subunits. The 20S proteasome core is composed of 28 subunits that are arranged in four stacked rings, resulting in a barrel-shaped structure. The two end rings are each formed by seven alpha subunits, and the two central rings are each formed by seven beta subunits. The catalytic chamber with the active sites is on the inside of the barrel.

It localises to the cytoplasm. Its subcellular location is the nucleus. The enzyme catalyses Cleavage of peptide bonds with very broad specificity.. In terms of biological role, the proteasome is a multicatalytic proteinase complex which is characterized by its ability to cleave peptides with Arg, Phe, Tyr, Leu, and Glu adjacent to the leaving group at neutral or slightly basic pH. The proteasome has an ATP-dependent proteolytic activity. The polypeptide is Proteasome subunit beta type-5 (psmB5) (Dictyostelium discoideum (Social amoeba)).